We begin with the raw amino-acid sequence, 611 residues long: tRNA uridine 5-carboxymethylaminomethyl modification enzyme MnmG (611 aa).

Residue 14–19 participates in FAD binding; the sequence is GAGHAG. 274 to 288 lines the NAD(+) pocket; the sequence is GPRYCPSIEDKIVKF.

This sequence belongs to the MnmG family. In terms of assembly, homodimer. Heterotetramer of two MnmE and two MnmG subunits. The cofactor is FAD.

The protein resides in the cytoplasm. Functionally, NAD-binding protein involved in the addition of a carboxymethylaminomethyl (cmnm) group at the wobble position (U34) of certain tRNAs, forming tRNA-cmnm(5)s(2)U34. In Chlamydia felis (strain Fe/C-56) (Chlamydophila felis), this protein is tRNA uridine 5-carboxymethylaminomethyl modification enzyme MnmG.